The primary structure comprises 363 residues: Endopolygalacturonase 1 (363 aa).

An N-terminal signal peptide occupies residues 1–17 (MVSYLFVLGALASVAIA). The propeptide occupies 18–26 (SPVPELKAR). A disulfide bond links cysteine 29 and cysteine 44. 4 PbH1 repeats span residues 188–209 (STGV…AVNS), 210–230 (GTNI…SIGS), 239–260 (VKSV…RIKT), and 268–290 (VSDI…VIEQ). The active-site Proton donor is the aspartate 202. Cysteine 204 and cysteine 220 are disulfide-bonded. Asparagine 212 carries an N-linked (GlcNAc...) asparagine glycan. Histidine 224 is a catalytic residue. 2 disulfides stabilise this stretch: cysteine 330-cysteine 333 and cysteine 352-cysteine 363.

The protein belongs to the glycosyl hydrolase 28 family.

The protein resides in the secreted. It catalyses the reaction (1,4-alpha-D-galacturonosyl)n+m + H2O = (1,4-alpha-D-galacturonosyl)n + (1,4-alpha-D-galacturonosyl)m.. Involved in maceration and soft-rotting of plant tissue. Hydrolyzes the 1,4-alpha glycosidic bonds of de-esterified pectate in the smooth region of the plant cell wall. The chain is Endopolygalacturonase 1 (PG1) from Colletotrichum lindemuthianum (Bean anthracnose fungus).